The following is an 85-amino-acid chain: UPF0297 protein lhv_0439 (85 aa).

Belongs to the UPF0297 family.

The polypeptide is UPF0297 protein lhv_0439 (Lactobacillus helveticus (strain DPC 4571)).